A 101-amino-acid chain; its full sequence is Small ribosomal subunit protein uS14 (101 aa).

Belongs to the universal ribosomal protein uS14 family. In terms of assembly, part of the 30S ribosomal subunit. Contacts proteins S3 and S10.

Its function is as follows. Binds 16S rRNA, required for the assembly of 30S particles and may also be responsible for determining the conformation of the 16S rRNA at the A site. The sequence is that of Small ribosomal subunit protein uS14 from Neisseria gonorrhoeae (strain ATCC 700825 / FA 1090).